The following is an 86-amino-acid chain: Small ribosomal subunit protein bS20 (86 aa).

The protein belongs to the bacterial ribosomal protein bS20 family.

Binds directly to 16S ribosomal RNA. This Pelagibacter ubique (strain HTCC1062) protein is Small ribosomal subunit protein bS20.